We begin with the raw amino-acid sequence, 315 residues long: Beta-ketoacyl-[acyl-carrier-protein] synthase III 2 (315 aa).

Active-site residues include cysteine 113 and histidine 241. An ACP-binding region spans residues 242 to 246 (QANLR). Asparagine 271 is an active-site residue.

The protein belongs to the thiolase-like superfamily. FabH family. As to quaternary structure, homodimer.

It is found in the cytoplasm. The catalysed reaction is malonyl-[ACP] + acetyl-CoA + H(+) = 3-oxobutanoyl-[ACP] + CO2 + CoA. It participates in lipid metabolism; fatty acid biosynthesis. Catalyzes the condensation reaction of fatty acid synthesis by the addition to an acyl acceptor of two carbons from malonyl-ACP. Catalyzes the first condensation reaction which initiates fatty acid synthesis and may therefore play a role in governing the total rate of fatty acid production. Possesses both acetoacetyl-ACP synthase and acetyl transacylase activities. Its substrate specificity determines the biosynthesis of branched-chain and/or straight-chain of fatty acids. The chain is Beta-ketoacyl-[acyl-carrier-protein] synthase III 2 from Streptomyces avermitilis (strain ATCC 31267 / DSM 46492 / JCM 5070 / NBRC 14893 / NCIMB 12804 / NRRL 8165 / MA-4680).